We begin with the raw amino-acid sequence, 483 residues long: Altronate oxidoreductase (483 aa).

18-29 is an NAD(+) binding site; it reads IIQFGEGNFLRA.

This sequence belongs to the mannitol dehydrogenase family. UxaB subfamily.

The enzyme catalyses D-altronate + NAD(+) = keto-D-tagaturonate + NADH + H(+). Its pathway is carbohydrate metabolism; pentose and glucuronate interconversion. The protein is Altronate oxidoreductase of Escherichia coli O17:K52:H18 (strain UMN026 / ExPEC).